The following is a 573-amino-acid chain: ATP-dependent RNA helicase RhlB (573 aa).

The Q motif signature appears at 9 to 37; sequence VTFSSFDLHPALIAGLESAGFTRCTPIQA. Residues 40 to 220 enclose the Helicase ATP-binding domain; that stretch reads LPVALPGGDV…YEHMNEPEKL (181 aa). 53-60 is a binding site for ATP; it reads AQTGTGKT. Residues 166–169 carry the DEAD box motif; sequence DEAD. In terms of domain architecture, Helicase C-terminal spans 231 to 393; sequence RVRQRIYFPS…PVTSELLTPL (163 aa). Residues 391–560 are disordered; the sequence is TPLPRAPRVP…KPSGSPSLLS (170 aa). Over residues 402–411 the composition is skewed to acidic residues; the sequence is EGEEADDDAG. Residues 419–432 show a composition bias toward basic and acidic residues; it reads REAREQRAAEEQRR. The segment covering 435 to 450 has biased composition (gly residues); that stretch reads GRSGSGGSRSGSGGGG. The span at 451–462 shows a compositional bias: basic and acidic residues; sequence GRREGAGADGKP. Over residues 484–499 the composition is skewed to low complexity; that stretch reads PVVAAAAGQAPSAGVA. Residues 505–514 show a composition bias toward basic residues; it reads PRKRRRRRNG. Over residues 541 to 560 the composition is skewed to low complexity; sequence VVAKPVRAAAKPSGSPSLLS.

It belongs to the DEAD box helicase family. RhlB subfamily. As to quaternary structure, component of the RNA degradosome, which is a multiprotein complex involved in RNA processing and mRNA degradation.

The protein localises to the cytoplasm. The catalysed reaction is ATP + H2O = ADP + phosphate + H(+). Its function is as follows. DEAD-box RNA helicase involved in RNA degradation. Has RNA-dependent ATPase activity and unwinds double-stranded RNA. The polypeptide is ATP-dependent RNA helicase RhlB (Xanthomonas euvesicatoria pv. vesicatoria (strain 85-10) (Xanthomonas campestris pv. vesicatoria)).